A 1124-amino-acid polypeptide reads, in one-letter code: Probable leucine-rich repeat receptor-like protein kinase At2g33170 (1124 aa).

Residues 1-32 (MGWWIFEFKKESKSMFVGVLFLLTLLVWTSES) form the signal peptide. Topologically, residues 33–752 (LNSDGQFLLE…LKAGSARRGR (720 aa)) are extracellular. N-linked (GlcNAc...) asparagine glycans are attached at residues N72, N96, and N131. LRR repeat units follow at residues 86–109 (VVTS…GGLV), 110–132 (NLVY…IGNC), 134–156 (KLEV…INKL), 158–180 (QLRS…IGDL), 182–205 (NLEE…GNLN), 206–228 (KLTT…IGKC), 230–252 (NLKL…IGML), 254–277 (KLQE…GNLT), 278–300 (SLET…IGNM), 302–325 (SLKK…GKLS), 326–348 (KVME…LSKI), 350–371 (ELRL…ELSK), 374–397 (NLAK…QNLT), 398–420 (SMRQ…LGLY), 422–444 (PLWV…ICQQ), 446–468 (NLIL…VLRC), 470–491 (SLLQ…ELCK), 494–516 (NLSA…IGTC), 518–540 (KLQR…ISKL), 542–564 (NLVT…IANC), 566–588 (MLQR…LGSL), 590–613 (QLEI…GNLT), 614–636 (HLTE…LGLL), 638–661 (SLQI…IGNL), 663–686 (LLMY…ENLS), and 687–709 (SLLG…QIFQ). The N-linked (GlcNAc...) asparagine glycan is linked to N192. N-linked (GlcNAc...) asparagine glycosylation occurs at N275. N314 carries an N-linked (GlcNAc...) asparagine glycan. N395 carries N-linked (GlcNAc...) asparagine glycosylation. N494 is a glycosylation site (N-linked (GlcNAc...) asparagine). The N-linked (GlcNAc...) asparagine glycan is linked to N547. N611 carries an N-linked (GlcNAc...) asparagine glycan. N-linked (GlcNAc...) asparagine glycans are attached at residues N644, N684, N692, N697, and N710. The chain crosses the membrane as a helical span at residues 753–773 (IIIIVSSVIGGISLLLIAIVV). The Cytoplasmic segment spans residues 774 to 1124 (HFLRNPVEPT…CSDLPPPAPP (351 aa)). Phosphothreonine occurs at positions 808 and 816. In terms of domain architecture, Protein kinase spans 819–1100 (FHDSYIVGRG…TMREVVLMLI (282 aa)). Residues 825–833 (VGRGACGTV) and K847 each bind ATP. Y901 and Y939 each carry phosphotyrosine. Catalysis depends on D952, which acts as the Proton acceptor. Position 986 is a phosphoserine (S986). Residues Y994 and Y1001 each carry the phosphotyrosine modification. Position 1002 is a phosphothreonine (T1002).

The protein belongs to the protein kinase superfamily. Ser/Thr protein kinase family.

The protein resides in the membrane. It carries out the reaction L-seryl-[protein] + ATP = O-phospho-L-seryl-[protein] + ADP + H(+). It catalyses the reaction L-threonyl-[protein] + ATP = O-phospho-L-threonyl-[protein] + ADP + H(+). The chain is Probable leucine-rich repeat receptor-like protein kinase At2g33170 from Arabidopsis thaliana (Mouse-ear cress).